We begin with the raw amino-acid sequence, 98 residues long: NADH-ubiquinone oxidoreductase chain 4L (98 aa).

3 helical membrane passes run 1–21, 27–47, and 61–81; these read MIPT…GMLT, VASL…ATLI, and IILL…LISI.

This sequence belongs to the complex I subunit 4L family. As to quaternary structure, core subunit of respiratory chain NADH dehydrogenase (Complex I) which is composed of 45 different subunits.

The protein resides in the mitochondrion inner membrane. The catalysed reaction is a ubiquinone + NADH + 5 H(+)(in) = a ubiquinol + NAD(+) + 4 H(+)(out). Core subunit of the mitochondrial membrane respiratory chain NADH dehydrogenase (Complex I) which catalyzes electron transfer from NADH through the respiratory chain, using ubiquinone as an electron acceptor. Part of the enzyme membrane arm which is embedded in the lipid bilayer and involved in proton translocation. This is NADH-ubiquinone oxidoreductase chain 4L (MT-ND4L) from Macaca hecki (Heck's macaque).